A 245-amino-acid chain; its full sequence is Phycocyanobilin:ferredoxin oxidoreductase (245 aa).

It belongs to the HY2 family.

It carries out the reaction (2R,3Z)-phycocyanobilin + 4 oxidized [2Fe-2S]-[ferredoxin] = biliverdin IXalpha + 4 reduced [2Fe-2S]-[ferredoxin] + 4 H(+). In terms of biological role, catalyzes the four-electron reduction of biliverdin IX-alpha (2-electron reduction at both the A and D rings); the reaction proceeds via an isolatable 2-electron intermediate, 181,182-dihydrobiliverdin. The chain is Phycocyanobilin:ferredoxin oxidoreductase from Trichormus variabilis (strain ATCC 29413 / PCC 7937) (Anabaena variabilis).